A 440-amino-acid chain; its full sequence is COP9 signalosome complex subunit 5 (440 aa).

The 148-residue stretch at 71 to 218 (VLISKLSCEK…MGAFRTIESK (148 aa)) folds into the MPN domain. His164, His166, and Asp177 together coordinate Zn(2+). Positions 164-177 (HSHPGYDCWLSNID) match the JAMM motif motif. Residues 319-341 (TQRGDSTETSSFGSMFSGDNTSD) show a composition bias toward polar residues. Disordered regions lie at residues 319–343 (TQRGDSTETSSFGSMFSGDNTSDVD) and 376–400 (SRSTDNFHNSKKRMNSNQEKCHDEG).

Belongs to the peptidase M67A family. CSN5 subfamily. Component of a COP9 signalosome-like (CSN) complex, composed of at least RRI1/CSN5, CSN9, RRI2/CSN10, PCI8/CSN11, CSN12 and CSI1. Within this complex it probably interacts directly with CSN12. Also interacts with RPN5. A divalent metal cation serves as cofactor.

It localises to the cytoplasm. The protein resides in the nucleus. Its function is as follows. Catalytic component of the COP9 signalosome (CSN) complex that acts as an regulator of the ubiquitin (Ubl) conjugation pathway by mediating the deneddylation of the cullin subunit of SCF-type E3 ubiquitin-protein ligase complexes. The CSN complex is involved in the regulation of the mating pheromone response. The sequence is that of COP9 signalosome complex subunit 5 (RRI1) from Saccharomyces cerevisiae (strain YJM789) (Baker's yeast).